A 162-amino-acid polypeptide reads, in one-letter code: Small ribosomal subunit protein bS16 (162 aa).

The interval 113-162 (ADGGPTTEATKPKKKSPAKKAAKAAEPAPQPEQPDTPALGGEQAELTAES) is disordered. Residues 124–134 (PKKKSPAKKAA) are compositionally biased toward basic residues.

The protein belongs to the bacterial ribosomal protein bS16 family.

The polypeptide is Small ribosomal subunit protein bS16 (Mycobacterium tuberculosis (strain ATCC 25177 / H37Ra)).